The sequence spans 633 residues: 1-deoxy-D-xylulose-5-phosphate synthase (633 aa).

The segment at 1–22 (MPTTFHEIPRKRPTTPLLDRAQ) is disordered. Thiamine diphosphate is bound by residues histidine 87 and 128–130 (GHS). Aspartate 159 lines the Mg(2+) pocket. Thiamine diphosphate-binding positions include 160–161 (GA), asparagine 188, phenylalanine 295, and glutamate 378. Asparagine 188 lines the Mg(2+) pocket.

It belongs to the transketolase family. DXPS subfamily. As to quaternary structure, homodimer. Mg(2+) is required as a cofactor. The cofactor is thiamine diphosphate.

The catalysed reaction is D-glyceraldehyde 3-phosphate + pyruvate + H(+) = 1-deoxy-D-xylulose 5-phosphate + CO2. Its pathway is metabolic intermediate biosynthesis; 1-deoxy-D-xylulose 5-phosphate biosynthesis; 1-deoxy-D-xylulose 5-phosphate from D-glyceraldehyde 3-phosphate and pyruvate: step 1/1. In terms of biological role, catalyzes the acyloin condensation reaction between C atoms 2 and 3 of pyruvate and glyceraldehyde 3-phosphate to yield 1-deoxy-D-xylulose-5-phosphate (DXP). The protein is 1-deoxy-D-xylulose-5-phosphate synthase of Pseudomonas fluorescens (strain ATCC BAA-477 / NRRL B-23932 / Pf-5).